The primary structure comprises 398 residues: Phosphoglycerate kinase (398 aa).

Substrate-binding positions include 21-23 (DFN), R36, 59-62 (HLGR), R119, and R157. ATP contacts are provided by residues K208, G296, E327, and 354-357 (GGDS).

Belongs to the phosphoglycerate kinase family. In terms of assembly, monomer.

The protein localises to the cytoplasm. It carries out the reaction (2R)-3-phosphoglycerate + ATP = (2R)-3-phospho-glyceroyl phosphate + ADP. It participates in carbohydrate degradation; glycolysis; pyruvate from D-glyceraldehyde 3-phosphate: step 2/5. This is Phosphoglycerate kinase from Streptococcus pneumoniae serotype 19F (strain G54).